Reading from the N-terminus, the 227-residue chain is Enolase-phosphatase E1 (227 aa).

Mg(2+) contacts are provided by Asp-12 and Glu-14. Residues 118 to 119 (SS) and Lys-159 contribute to the substrate site. Asp-186 provides a ligand contact to Mg(2+).

It belongs to the HAD-like hydrolase superfamily. MasA/MtnC family. Monomer. Mg(2+) serves as cofactor.

The protein localises to the cytoplasm. It is found in the nucleus. It catalyses the reaction 5-methylsulfanyl-2,3-dioxopentyl phosphate + H2O = 1,2-dihydroxy-5-(methylsulfanyl)pent-1-en-3-one + phosphate. The protein operates within amino-acid biosynthesis; L-methionine biosynthesis via salvage pathway; L-methionine from S-methyl-5-thio-alpha-D-ribose 1-phosphate: step 3/6. It functions in the pathway amino-acid biosynthesis; L-methionine biosynthesis via salvage pathway; L-methionine from S-methyl-5-thio-alpha-D-ribose 1-phosphate: step 4/6. In terms of biological role, bifunctional enzyme that catalyzes the enolization of 2,3-diketo-5-methylthiopentyl-1-phosphate (DK-MTP-1-P) into the intermediate 2-hydroxy-3-keto-5-methylthiopentenyl-1-phosphate (HK-MTPenyl-1-P), which is then dephosphorylated to form the acireductone 1,2-dihydroxy-3-keto-5-methylthiopentene (DHK-MTPene). This Vanderwaltozyma polyspora (strain ATCC 22028 / DSM 70294 / BCRC 21397 / CBS 2163 / NBRC 10782 / NRRL Y-8283 / UCD 57-17) (Kluyveromyces polysporus) protein is Enolase-phosphatase E1.